A 146-amino-acid polypeptide reads, in one-letter code: Gastrin-releasing peptide (146 aa).

The first 23 residues, 1–23 (MRGSELSLLLLALVLCQAPRGPA), serve as a signal peptide directing secretion. The residue at position 52 (methionine 52) is a Methionine amide. Residues 56-146 (STDESPSLYA…VLKEKGGTAS (91 aa)) constitute a propeptide that is removed on maturation. Residues 94–112 (AAGNQSHQPPQHPPLSLQP) are compositionally biased toward low complexity. Residues 94–121 (AAGNQSHQPPQHPPLSLQPTWDPEDGSY) are disordered.

Belongs to the bombesin/neuromedin-B/ranatensin family. As to expression, detected in peptidergic dorsal root ganglion neurons (at protein level). Expressed in several dozen neurons throughout the dorsal retrotrapezoid nucleus/parafacial respiratory group (RTN/pFRG) as well as in scattered cells in the nucleus tractus solitarius and parabrachial nucleus (at protein level). Within the RTN/pFRG, expressed in neuronal subpopulations distinct from those expressing Nmb (at protein level). Expressed in L6 corticothalamic neurons (at protein level). Strongly expressed in several input areas of the auditory cortex including the lateral amygdala, contralateral auditory cortex, temporal association area, perirhinal cortex and auditory thalamic nuclei (at protein level). Detected in the suprachiasmatic nucleus in the hypothalamus. Detected in a subset of glutamatergic cells in the cortex. Highly expressed both in the lateral nucleus of the amygdala, and in regions sending synaptic projections to the lateral nucleus.

It is found in the secreted. It localises to the cytoplasmic vesicle. The protein localises to the secretory vesicle lumen. Its subcellular location is the cell projection. The protein resides in the neuron projection. Functionally, stimulates the release of gastrin and other gastrointestinal hormones. Contributes to the perception of prurient stimuli and to the transmission of itch signals in the spinal cord that promote scratching behavior. Contributes primarily to nonhistaminergic itch sensation. In one study, shown to act in the amygdala as part of an inhibitory network which inhibits memory specifically related to learned fear. In another study, shown to act on vasoactive intestinal peptide (VIP)-expressing cells in the auditory cortex, most likely via extrasynaptic diffusion from local and long-range sources, to mediate disinhibition of glutamatergic cells via VIP cell-specific GRPR signaling which leads to enhanced auditory fear memories. Contributes to the regulation of food intake. Inhibits voltage-gated sodium channels but enhances voltage-gated potassium channels in hippocampal neurons. Contributes to the induction of sighing by acting directly on the pre-Botzinger complex, a cluster of several thousand neurons in the ventrolateral medulla responsible for inspiration during respiratory activity. Induces an itch response through activation of receptors present on mast cells, triggering mast cell degranulation. The sequence is that of Gastrin-releasing peptide (Grp) from Mus musculus (Mouse).